The chain runs to 106 residues: Large ribosomal subunit protein P2A (106 aa).

K2 participates in a covalent cross-link: Glycyl lysine isopeptide (Lys-Gly) (interchain with G-Cter in ubiquitin). T16 bears the Phosphothreonine mark. Phosphoserine is present on residues S40 and S43. K48 participates in a covalent cross-link: Glycyl lysine isopeptide (Lys-Gly) (interchain with G-Cter in ubiquitin). At S49 the chain carries Phosphoserine. The segment covering 65–82 has biased composition (low complexity); sequence PAAGPASAGGAAAASGDA. Positions 65–106 are disordered; it reads PAAGPASAGGAAAASGDAAAEEEKEEEAAEESDDDMGFGLFD. The segment covering 83–100 has biased composition (acidic residues); the sequence is AAEEEKEEEAAEESDDDM. S96 carries the phosphoserine modification.

It belongs to the eukaryotic ribosomal protein P1/P2 family. Component of the large ribosomal subunit (LSU). Mature yeast ribosomes consist of a small (40S) and a large (60S) subunit. The 40S small subunit contains 1 molecule of ribosomal RNA (18S rRNA) and 33 different proteins (encoded by 57 genes). The large 60S subunit contains 3 rRNA molecules (25S, 5.8S and 5S rRNA) and 46 different proteins (encoded by 81 genes). The 5 acidic ribosomal P-proteins form the stalk structure of the 60S subunit. They are organized as a pentameric complex in which uL10/P0 interacts with 2 heterodimers, P1A-P2B and P1B-P2A. Phosphorylation is not involved in the interaction of the acidic P proteins with the ribosome, however it is suggested to affect the ribosome activity and to participate in a possible ribosome regulatory mechanism. Post-translationally, the N-terminus is not modified.

The protein resides in the cytoplasm. Component of the ribosome, a large ribonucleoprotein complex responsible for the synthesis of proteins in the cell. The small ribosomal subunit (SSU) binds messenger RNAs (mRNAs) and translates the encoded message by selecting cognate aminoacyl-transfer RNA (tRNA) molecules. The large subunit (LSU) contains the ribosomal catalytic site termed the peptidyl transferase center (PTC), which catalyzes the formation of peptide bonds, thereby polymerizing the amino acids delivered by tRNAs into a polypeptide chain. The nascent polypeptides leave the ribosome through a tunnel in the LSU and interact with protein factors that function in enzymatic processing, targeting, and the membrane insertion of nascent chains at the exit of the ribosomal tunnel. This chain is Large ribosomal subunit protein P2A, found in Saccharomyces cerevisiae (strain ATCC 204508 / S288c) (Baker's yeast).